We begin with the raw amino-acid sequence, 324 residues long: tRNA U34 carboxymethyltransferase (324 aa).

Residues Lys91, Trp105, Lys110, Gly130, 152–154 (DPS), 181–182 (IE), Met196, Tyr200, and Arg315 contribute to the carboxy-S-adenosyl-L-methionine site.

Belongs to the class I-like SAM-binding methyltransferase superfamily. CmoB family. Homotetramer.

It carries out the reaction carboxy-S-adenosyl-L-methionine + 5-hydroxyuridine(34) in tRNA = 5-carboxymethoxyuridine(34) in tRNA + S-adenosyl-L-homocysteine + H(+). Functionally, catalyzes carboxymethyl transfer from carboxy-S-adenosyl-L-methionine (Cx-SAM) to 5-hydroxyuridine (ho5U) to form 5-carboxymethoxyuridine (cmo5U) at position 34 in tRNAs. In Aliivibrio salmonicida (strain LFI1238) (Vibrio salmonicida (strain LFI1238)), this protein is tRNA U34 carboxymethyltransferase.